A 367-amino-acid chain; its full sequence is MEGILCASPGCGKPAKLQCPTCVNLKLETPSHFCSQECFKTFWPLHKMYHQKGQPENLPSQFRNYKFTGPLRPTNITPMRKAPEGIELPDYAIGSIPISERVADRKNMANIIHTPEEIEIMRQLGKMSREVLDIAGNAAKVGMTTEELDIIVHNAVIERGAYPSPLNYYKFPKSCCTSLNEVICHGIPDERPLRDGDILNVDVTLYWKGFHSDLNETYLIGNVDERGKNLVKCAYDCLELAVAMCKPGTLYRELGDAIQKHANKQGFSVVKNFCGHGIGRLFHCNPTVPHYSKNKAVGAMKVGHVFTIEPMINEGTWQDEIWPDSWTAVTADGKRSAQFEHTLVITETGCEVLTKRTNGSYIDRHFK.

The C6H2-type zinc finger occupies Gly3 to Asn57. Zn(2+) contacts are provided by Cys6, Cys11, Cys19, Cys22, Cys34, Cys38, His46, and His50. His185 contacts a protein. Residues Asp202, Asp213, and His276 each contribute to the Zn(2+) site. His283 provides a ligand contact to a protein. Zn(2+) is bound by residues Glu309 and Glu340.

This sequence belongs to the peptidase M24A family. Methionine aminopeptidase type 1 subfamily. In terms of assembly, associates with the 60S ribosomal subunit of the 80S translational complex. Zn(2+) is required as a cofactor. The cofactor is Co(2+). Mn(2+) serves as cofactor. Requires Fe(2+) as cofactor.

The protein localises to the cytoplasm. It catalyses the reaction Release of N-terminal amino acids, preferentially methionine, from peptides and arylamides.. Cotranslationally removes the N-terminal methionine from nascent proteins. The N-terminal methionine is often cleaved when the second residue in the primary sequence is small and uncharged (Met-Ala-, Cys, Gly, Pro, Ser, Thr, or Val). The polypeptide is Methionine aminopeptidase 1 (metap1) (Dictyostelium discoideum (Social amoeba)).